Consider the following 204-residue polypeptide: FMN-dependent NADH:quinone oxidoreductase (204 aa).

FMN contacts are provided by residues Ser9, 15–17, 95–98, and 139–142; these read SVS, MYNF, and SRGG.

The protein belongs to the azoreductase type 1 family. Homodimer. It depends on FMN as a cofactor.

It catalyses the reaction 2 a quinone + NADH + H(+) = 2 a 1,4-benzosemiquinone + NAD(+). It carries out the reaction N,N-dimethyl-1,4-phenylenediamine + anthranilate + 2 NAD(+) = 2-(4-dimethylaminophenyl)diazenylbenzoate + 2 NADH + 2 H(+). Functionally, quinone reductase that provides resistance to thiol-specific stress caused by electrophilic quinones. In terms of biological role, also exhibits azoreductase activity. Catalyzes the reductive cleavage of the azo bond in aromatic azo compounds to the corresponding amines. The protein is FMN-dependent NADH:quinone oxidoreductase of Methylocella silvestris (strain DSM 15510 / CIP 108128 / LMG 27833 / NCIMB 13906 / BL2).